The primary structure comprises 156 residues: Small ribosomal subunit protein uS7 (156 aa).

This sequence belongs to the universal ribosomal protein uS7 family. In terms of assembly, part of the 30S ribosomal subunit. Contacts proteins S9 and S11.

One of the primary rRNA binding proteins, it binds directly to 16S rRNA where it nucleates assembly of the head domain of the 30S subunit. Is located at the subunit interface close to the decoding center, probably blocks exit of the E-site tRNA. The chain is Small ribosomal subunit protein uS7 from Oleidesulfovibrio alaskensis (strain ATCC BAA-1058 / DSM 17464 / G20) (Desulfovibrio alaskensis).